The following is a 281-amino-acid chain: INSIG family protein (281 aa).

At 1 to 93 (MSRKEIYEPR…FIDYSSLITF (93 aa)) the chain is on the cytoplasmic side. Phosphoserine is present on Ser-28. Residues 94–120 (FCKLCVIFGLGFVFTYLAEQIVQDAKL) traverse the membrane as a helical segment. Residues 121 to 134 (PLLTVNLKSWKFEP) lie on the Lumenal side of the membrane. Residues 135 to 159 (PWPAIFGFVAVILGLSYRRMDTKYP) form a helical membrane-spanning segment. At 160–170 (LGAAPLRPSQS) the chain is on the cytoplasmic side. The helical transmembrane segment at 171 to 186 (SKWQWISRYLAAFATL) threads the bilayer. The Lumenal portion of the chain corresponds to 187–189 (LLS). The helical transmembrane segment at 190-215 (MKKLLFISNSHSIVALVASSASIWYI) threads the bilayer. Residues 216–221 (FDRSRN) are Cytoplasmic-facing. Residues 222 to 256 (GIILSTITSVLGSILYYNLVDTSKIELNGVEFPEI) form a helical membrane-spanning segment. Residues 257–260 (QFRL) are Lumenal-facing. The helical transmembrane segment at 261–281 (WIPMILFSASTIVGNAGRLLF) threads the bilayer.

Belongs to the INSIG family.

The protein resides in the endoplasmic reticulum membrane. The chain is INSIG family protein (ins1) from Schizosaccharomyces pombe (strain 972 / ATCC 24843) (Fission yeast).